The primary structure comprises 512 residues: D-alanine--D-alanyl carrier protein ligase (512 aa).

152-153 contacts ATP; that stretch reads TS. Asp199 is a D-alanine binding site. 294 to 299 lines the ATP pocket; that stretch reads NAYGPT. Residue Val303 coordinates D-alanine. ATP contacts are provided by residues Asp385, 397–400, and Lys499; that span reads YGGR. Position 499 (Lys499) interacts with D-alanine.

This sequence belongs to the ATP-dependent AMP-binding enzyme family. DltA subfamily.

The protein localises to the cytoplasm. The enzyme catalyses holo-[D-alanyl-carrier protein] + D-alanine + ATP = D-alanyl-[D-alanyl-carrier protein] + AMP + diphosphate. It participates in cell wall biogenesis; lipoteichoic acid biosynthesis. Functionally, catalyzes the first step in the D-alanylation of lipoteichoic acid (LTA), the activation of D-alanine and its transfer onto the D-alanyl carrier protein (Dcp) DltC. In an ATP-dependent two-step reaction, forms a high energy D-alanyl-AMP intermediate, followed by transfer of the D-alanyl residue as a thiol ester to the phosphopantheinyl prosthetic group of the Dcp. D-alanylation of LTA plays an important role in modulating the properties of the cell wall in Gram-positive bacteria, influencing the net charge of the cell wall. In Streptococcus pyogenes serotype M18 (strain MGAS8232), this protein is D-alanine--D-alanyl carrier protein ligase.